A 258-amino-acid polypeptide reads, in one-letter code: Ribosomal RNA small subunit methyltransferase J (258 aa).

Residues Glu-123–Arg-124 and Asp-177 each bind S-adenosyl-L-methionine. Positions Ile-232–Ala-258 are disordered. Residues His-239–Pro-252 are compositionally biased toward basic and acidic residues.

The protein belongs to the methyltransferase superfamily. RsmJ family.

The protein localises to the cytoplasm. The catalysed reaction is guanosine(1516) in 16S rRNA + S-adenosyl-L-methionine = N(2)-methylguanosine(1516) in 16S rRNA + S-adenosyl-L-homocysteine + H(+). Specifically methylates the guanosine in position 1516 of 16S rRNA. The polypeptide is Ribosomal RNA small subunit methyltransferase J (Pseudomonas putida (strain W619)).